A 116-amino-acid chain; its full sequence is MARIQGVDLPNDKRVEIGLTAIYGIGRQSSNKILAKLGINPDTRVKDLTESELSDIRNELDNYLTEGDLRRDVAMNIKRLKEINCYRGSRHKKGLPVRGQHTKNNARTRKGPRKQA.

A disordered region spans residues glycine 88 to alanine 116.

The protein belongs to the universal ribosomal protein uS13 family. In terms of assembly, part of the 30S ribosomal subunit. Forms a loose heterodimer with protein S19. Forms two bridges to the 50S subunit in the 70S ribosome.

Located at the top of the head of the 30S subunit, it contacts several helices of the 16S rRNA. In the 70S ribosome it contacts the 23S rRNA (bridge B1a) and protein L5 of the 50S subunit (bridge B1b), connecting the 2 subunits; these bridges are implicated in subunit movement. Contacts the tRNAs in the A and P-sites. This Finegoldia magna (strain ATCC 29328 / DSM 20472 / WAL 2508) (Peptostreptococcus magnus) protein is Small ribosomal subunit protein uS13.